We begin with the raw amino-acid sequence, 486 residues long: Keratin-3, type I cytoskeletal 51 kDa (486 aa).

Residues 1–125 (MSNYSIKQSA…AGGMDIFSTN (125 aa)) are head. The tract at residues 126 to 161 (EKQTMQNLNDRLASYLDKVHALETANTELERKIKEW) is coil 1A. The IF rod domain maps to 126–442 (EKQTMQNLND…RLLDGDLSKP (317 aa)). Residues 162-184 (YEKQRPGSSSGDGAKDYSKYYTM) form a linker 1 region. The segment at 185 to 276 (INDLKNQIIA…KNHEDELKGM (92 aa)) is coil 1B. The tract at residues 277–299 (QVTQVGQVNVEMNAAPSSDLTKI) is linker 12. Residues 300 to 438 (LNDMRSQYED…ETYRRLLDGD (139 aa)) are coil 2. The segment at 435-466 (LDGDLSKPKSGGGTSTNTGSTSSKGSTRTVKR) is disordered. Positions 439 to 486 (LSKPKSGGGTSTNTGSTSSKGSTRTVKRREIIEEVVDGKVVSTKVVDM) are tail. Residues 449-461 (STNTGSTSSKGST) are compositionally biased toward low complexity.

Belongs to the intermediate filament family. As to quaternary structure, heterotetramer of two type I and two type II keratins.

This chain is Keratin-3, type I cytoskeletal 51 kDa, found in Xenopus laevis (African clawed frog).